The sequence spans 142 residues: Large ribosomal subunit protein uL13 (142 aa).

Belongs to the universal ribosomal protein uL13 family. As to quaternary structure, part of the 50S ribosomal subunit.

Its function is as follows. This protein is one of the early assembly proteins of the 50S ribosomal subunit, although it is not seen to bind rRNA by itself. It is important during the early stages of 50S assembly. The chain is Large ribosomal subunit protein uL13 from Pseudomonas putida (strain ATCC 700007 / DSM 6899 / JCM 31910 / BCRC 17059 / LMG 24140 / F1).